Reading from the N-terminus, the 194-residue chain is Small ribosomal subunit protein uS11m (194 aa).

The protein belongs to the universal ribosomal protein uS11 family. In terms of assembly, component of the mitochondrial small ribosomal subunit (mt-SSU). Mature mammalian 55S mitochondrial ribosomes consist of a small (28S) and a large (39S) subunit. The 28S small subunit contains a 12S ribosomal RNA (12S mt-rRNA) and 30 different proteins. The 39S large subunit contains a 16S rRNA (16S mt-rRNA), a copy of mitochondrial valine transfer RNA (mt-tRNA(Val)), which plays an integral structural role, and 52 different proteins.

The protein resides in the mitochondrion. This is Small ribosomal subunit protein uS11m (MRPS11) from Homo sapiens (Human).